A 550-amino-acid polypeptide reads, in one-letter code: Cyclopentanone 1,2-monooxygenase (550 aa).

FAD contacts are provided by residues 31–32 (FT), Asp-51, Trp-60, Asp-71, Tyr-77, and Val-123.

The protein belongs to the FAD-binding monooxygenase family. In terms of assembly, homotetramer. The cofactor is FAD.

It catalyses the reaction cyclopentanone + NADPH + O2 + H(+) = 5-valerolactone + NADP(+) + H2O. Its pathway is alcohol metabolism; cyclopentanol degradation; 5-valerolactone from cyclopentanol: step 2/2. Its function is as follows. Catalyzes a Baeyer-Villiger oxidation reaction, i.e. the insertion of an oxygen atom into a carbon-carbon bond adjacent to a carbonyl, which converts ketones to esters or lactones using NADPH as an electron donor. Converts cyclopentanone to 5-valerolactone, a step in the degradation pathway of cyclopentanol. Besides cycloalkanones, can also act on methylated and other alkylated cycloalkanones, and on methylated cycloalkenones, with high enantioselectivity in some cases. Cannot use NADH instead of NADPH. This chain is Cyclopentanone 1,2-monooxygenase (cpnB), found in Comamonas sp. (strain NCIMB 9872).